A 736-amino-acid chain; its full sequence is Catalase-peroxidase (736 aa).

The signal sequence occupies residues M1–A21. The segment at residues W102–Y224 is a cross-link (tryptophyl-tyrosyl-methioninium (Trp-Tyr) (with M-250)). H103 functions as the Proton acceptor in the catalytic mechanism. Positions Y224–M250 form a cross-link, tryptophyl-tyrosyl-methioninium (Tyr-Met) (with W-102). A heme b-binding site is contributed by H265.

Belongs to the peroxidase family. Peroxidase/catalase subfamily. In terms of assembly, homodimer or homotetramer. Heme b is required as a cofactor. Post-translationally, formation of the three residue Trp-Tyr-Met cross-link is important for the catalase, but not the peroxidase activity of the enzyme.

The enzyme catalyses H2O2 + AH2 = A + 2 H2O. It carries out the reaction 2 H2O2 = O2 + 2 H2O. Bifunctional enzyme with both catalase and broad-spectrum peroxidase activity. The chain is Catalase-peroxidase from Shewanella woodyi (strain ATCC 51908 / MS32).